A 273-amino-acid polypeptide reads, in one-letter code: Probable glycerophosphodiester phosphodiesterase GpdQ (273 aa).

Asp8, His10, Asp50, Asn80, His154, His194, and His196 together coordinate Fe cation.

This sequence belongs to the cyclic nucleotide phosphodiesterase class-III family. Fe(2+) is required as a cofactor.

The enzyme catalyses a sn-glycero-3-phosphodiester + H2O = an alcohol + sn-glycerol 3-phosphate + H(+). It carries out the reaction sn-glycero-3-phosphoethanolamine + H2O = ethanolamine + sn-glycerol 3-phosphate + H(+). Its function is as follows. Catalyzes the hydrolysis of the 3'-5' phosphodiester bond of glycerophosphodiesters such as glycerophosphorylethanolamine (GPE), a typical phospholipid metabolite. This chain is Probable glycerophosphodiester phosphodiesterase GpdQ, found in Arcobacter nitrofigilis (strain ATCC 33309 / DSM 7299 / CCUG 15893 / LMG 7604 / NCTC 12251 / CI) (Campylobacter nitrofigilis).